The sequence spans 232 residues: Ion-translocating oxidoreductase complex subunit E (232 aa).

6 helical membrane passes run 18–38, 39–59, 69–89, 93–113, 128–148, and 182–202; these read GLVQLLGLCPLLAVTATLTNA, LGLGLATVAVLIGSNVLVSLV, IPVFVMIIAALVTVVQLVINA, GLYLSLGIFLPLIVTNCVIIG, AFDGLMMGTGFTAVLAVLGAV, and SFLLAMLPPGAFIAMGLLIAG.

The protein belongs to the NqrDE/RnfAE family. As to quaternary structure, the complex is composed of six subunits: RnfA, RnfB, RnfC, RnfD, RnfE and RnfG.

The protein localises to the cell inner membrane. Part of a membrane-bound complex that couples electron transfer with translocation of ions across the membrane. This chain is Ion-translocating oxidoreductase complex subunit E, found in Shewanella amazonensis (strain ATCC BAA-1098 / SB2B).